The sequence spans 257 residues: Putative pentatricopeptide repeat-containing protein At1g43010 (257 aa).

PPR repeat units lie at residues 133–168 (KMRD…GFLL) and 169–203 (KPYL…NMEV).

This sequence belongs to the PPR family. P subfamily.

This Arabidopsis thaliana (Mouse-ear cress) protein is Putative pentatricopeptide repeat-containing protein At1g43010.